A 219-amino-acid polypeptide reads, in one-letter code: 2-phospho-L-lactate guanylyltransferase (219 aa).

This sequence belongs to the CofC family. As to quaternary structure, homodimer.

It catalyses the reaction (2S)-2-phospholactate + GTP + H(+) = (2S)-lactyl-2-diphospho-5'-guanosine + diphosphate. It functions in the pathway cofactor biosynthesis; coenzyme F420 biosynthesis. Guanylyltransferase that catalyzes the activation of (2S)-2-phospholactate (2-PL) as (2S)-lactyl-2-diphospho-5'-guanosine, via the condensation of 2-PL with GTP. It is involved in the biosynthesis of coenzyme F420, a hydride carrier cofactor. This Methanocella arvoryzae (strain DSM 22066 / NBRC 105507 / MRE50) protein is 2-phospho-L-lactate guanylyltransferase.